The chain runs to 506 residues: Trans-cinnamate 4-monooxygenase (506 aa).

Residues 3–23 traverse the membrane as a helical segment; sequence LLLLEKTLLALFIAATIAVTI. (E)-cinnamate-binding positions include 213 to 218 and Ala307; that span reads RSRLAQ. Position 448 (Cys448) interacts with heme.

The protein belongs to the cytochrome P450 family. Heme is required as a cofactor.

The protein resides in the membrane. The catalysed reaction is (E)-cinnamate + reduced [NADPH--hemoprotein reductase] + O2 = (E)-4-coumarate + oxidized [NADPH--hemoprotein reductase] + H2O + H(+). It functions in the pathway phenylpropanoid metabolism; trans-4-coumarate biosynthesis; trans-4-coumarate from trans-cinnamate: step 1/1. Its function is as follows. Catalyzes the first oxidative step of the phenylpropanoid pathway in higher plants by transforming trans-cinnamate into p-coumarate. The compounds formed by this pathway are essential components for lignification, pollination, and defense against ultraviolet light, predators and pathogens. The chain is Trans-cinnamate 4-monooxygenase (CYP73A3) from Medicago sativa (Alfalfa).